Reading from the N-terminus, the 184-residue chain is Photosystem I assembly protein Ycf4 (184 aa).

Helical transmembrane passes span 22–42 (FCWA…GTSS) and 57–77 (ILFF…LFIS).

The protein belongs to the Ycf4 family.

The protein localises to the plastid. It localises to the chloroplast thylakoid membrane. Seems to be required for the assembly of the photosystem I complex. The sequence is that of Photosystem I assembly protein Ycf4 from Panax ginseng (Korean ginseng).